A 950-amino-acid chain; its full sequence is Bifunctional glutamine synthetase adenylyltransferase/adenylyl-removing enzyme (950 aa).

Positions 1-443 (MSLPSPLIPV…VFVTLIGDEE (443 aa)) are adenylyl removase. The adenylyl transferase stretch occupies residues 450–950 (ERHFNELWDM…WQEWLESSTI (501 aa)).

The protein belongs to the GlnE family. Mg(2+) serves as cofactor.

The catalysed reaction is [glutamine synthetase]-O(4)-(5'-adenylyl)-L-tyrosine + phosphate = [glutamine synthetase]-L-tyrosine + ADP. The enzyme catalyses [glutamine synthetase]-L-tyrosine + ATP = [glutamine synthetase]-O(4)-(5'-adenylyl)-L-tyrosine + diphosphate. Its function is as follows. Involved in the regulation of glutamine synthetase GlnA, a key enzyme in the process to assimilate ammonia. When cellular nitrogen levels are high, the C-terminal adenylyl transferase (AT) inactivates GlnA by covalent transfer of an adenylyl group from ATP to specific tyrosine residue of GlnA, thus reducing its activity. Conversely, when nitrogen levels are low, the N-terminal adenylyl removase (AR) activates GlnA by removing the adenylyl group by phosphorolysis, increasing its activity. The regulatory region of GlnE binds the signal transduction protein PII (GlnB) which indicates the nitrogen status of the cell. The polypeptide is Bifunctional glutamine synthetase adenylyltransferase/adenylyl-removing enzyme (Vibrio vulnificus (strain CMCP6)).